Consider the following 148-residue polypeptide: Ubiquitin-conjugating enzyme E2-17 kDa (148 aa).

One can recognise a UBC core domain in the interval 1–147 (MASKRILKEL…ARSWTQKYAM (147 aa)). Catalysis depends on cysteine 85, which acts as the Glycyl thioester intermediate.

The protein belongs to the ubiquitin-conjugating enzyme family.

The catalysed reaction is S-ubiquitinyl-[E1 ubiquitin-activating enzyme]-L-cysteine + [E2 ubiquitin-conjugating enzyme]-L-cysteine = [E1 ubiquitin-activating enzyme]-L-cysteine + S-ubiquitinyl-[E2 ubiquitin-conjugating enzyme]-L-cysteine.. Its pathway is protein modification; protein ubiquitination. Functionally, catalyzes the covalent attachment of ubiquitin to other proteins. Mediates the selective degradation of short-lived and abnormal proteins. In Solanum lycopersicum (Tomato), this protein is Ubiquitin-conjugating enzyme E2-17 kDa.